Reading from the N-terminus, the 333-residue chain is Ribosomal RNA small subunit methyltransferase H (333 aa).

S-adenosyl-L-methionine-binding positions include 43–45, D62, Y89, D110, and Q117; that span reads GGH. The disordered stretch occupies residues 312–333; it reads RLRAARRIRTTPTRPSPRRRRP.

Belongs to the methyltransferase superfamily. RsmH family.

The protein localises to the cytoplasm. It catalyses the reaction cytidine(1402) in 16S rRNA + S-adenosyl-L-methionine = N(4)-methylcytidine(1402) in 16S rRNA + S-adenosyl-L-homocysteine + H(+). In terms of biological role, specifically methylates the N4 position of cytidine in position 1402 (C1402) of 16S rRNA. The chain is Ribosomal RNA small subunit methyltransferase H from Beutenbergia cavernae (strain ATCC BAA-8 / DSM 12333 / CCUG 43141 / JCM 11478 / NBRC 16432 / NCIMB 13614 / HKI 0122).